A 300-amino-acid chain; its full sequence is Cis-3-alkyl-4-alkyloxetan-2-one decarboxylase (300 aa).

Residues 33–282 (VVVMLHGNPS…DDANHYVLED (250 aa)) enclose the AB hydrolase-1 domain.

The protein belongs to the AB hydrolase superfamily. As to quaternary structure, homotetramer. Forms a complex with OleC and OleD.

It is found in the cytoplasm. The catalysed reaction is a cis-3-alkyl-4-alkyloxetan-2-one = a cis-alkene + CO2. Involved in olefin biosynthesis. Catalyzes the elimination of carbon dioxide from beta-lactones to form the final olefin product. The sequence is that of Cis-3-alkyl-4-alkyloxetan-2-one decarboxylase from Xanthomonas campestris pv. campestris (strain ATCC 33913 / DSM 3586 / NCPPB 528 / LMG 568 / P 25).